We begin with the raw amino-acid sequence, 789 residues long: Disintegrin and metalloproteinase domain-containing protein 1 (789 aa).

A signal peptide spans 1–68 (MSVAASASRS…LLIFLPSTLC (68 aa)). Residues 238 to 432 (KYVEMFVVVN…HRGACLLDRP (195 aa)) form the Peptidase M12B domain. The N-linked (GlcNAc...) asparagine glycan is linked to Asn-259. Cystine bridges form between Cys-348–Cys-427, Cys-388–Cys-411, Cys-390–Cys-396, and Cys-497–Cys-517. A Zn(2+)-binding site is contributed by His-373. Glu-374 is a catalytic residue. His-377 and His-383 together coordinate Zn(2+). N-linked (GlcNAc...) asparagine glycosylation occurs at Asn-410. The Disintegrin domain occupies 441 to 525 (DAHCGNGVVE…ECPANSYMQD (85 aa)). Asn-633 is a glycosylation site (N-linked (GlcNAc...) asparagine). The region spanning 666–700 (LQYDCHPQEMCHGNGVCNNFKHCHCDAGFSPPDCS) is the EGF-like domain. 3 cysteine pairs are disulfide-bonded: Cys-670–Cys-682, Cys-676–Cys-688, and Cys-690–Cys-699. N-linked (GlcNAc...) asparagine glycosylation is present at Asn-720. The helical transmembrane segment at 743–763 (VVVLVVPIFLIVLLCCLMLIA) threads the bilayer. Topologically, residues 764-789 (YLWSEVQEAVSPGSSSTTSSSESESD) are cytoplasmic.

Heterodimer with ADAM2/fertilin subunit beta.

The protein resides in the membrane. Its function is as follows. May be involved in sperm-egg fusion. The protein is Disintegrin and metalloproteinase domain-containing protein 1 (Adam1) of Rattus norvegicus (Rat).